The primary structure comprises 563 residues: Arginine--tRNA ligase (563 aa).

A 'HIGH' region motif is present at residues 120–130; it reads PNIAKPFHIGH.

Belongs to the class-I aminoacyl-tRNA synthetase family. Monomer.

It localises to the cytoplasm. The enzyme catalyses tRNA(Arg) + L-arginine + ATP = L-arginyl-tRNA(Arg) + AMP + diphosphate. In Clostridium botulinum (strain 657 / Type Ba4), this protein is Arginine--tRNA ligase.